Consider the following 71-residue polypeptide: UPF0352 protein Ssed_1809 (71 aa).

The protein belongs to the UPF0352 family.

In Shewanella sediminis (strain HAW-EB3), this protein is UPF0352 protein Ssed_1809.